Consider the following 233-residue polypeptide: MIDSIRSSRALIDVRRLGTVDYRAAWQQQRDLADARVAGGPDTLLLLQHPAVYTAGRRTEPHERPLDGTPVVDTDRGGKITWHGPGQLVGYPIIGLAEPLDVVDYVRRLEEALIKVCADLGLDTVRVPGRSGVWVPGDAGRPDRKVAAIGVRVSRATTLHGFALNCDCELGAFNAIVPCGISDAGVTSLTAELRRPVAVDDVVTSVADAVCDALDGVLPVREHSPGARVASAM.

Residues 38–218 enclose the BPL/LPL catalytic domain; it reads AGGPDTLLLL…AVCDALDGVL (181 aa). Over residues 57–66 the composition is skewed to basic and acidic residues; the sequence is RRTEPHERPL. The interval 57 to 77 is disordered; sequence RRTEPHERPLDGTPVVDTDRG. Substrate contacts are provided by residues 76–83, 148–150, and 161–163; these read RGGKITWH, AIG, and GFA. Cys-179 acts as the Acyl-thioester intermediate in catalysis.

It belongs to the LipB family.

It localises to the cytoplasm. It carries out the reaction octanoyl-[ACP] + L-lysyl-[protein] = N(6)-octanoyl-L-lysyl-[protein] + holo-[ACP] + H(+). It functions in the pathway protein modification; protein lipoylation via endogenous pathway; protein N(6)-(lipoyl)lysine from octanoyl-[acyl-carrier-protein]: step 1/2. Its function is as follows. Catalyzes the transfer of endogenously produced octanoic acid from octanoyl-acyl-carrier-protein onto the lipoyl domains of lipoate-dependent enzymes. Lipoyl-ACP can also act as a substrate although octanoyl-ACP is likely to be the physiological substrate. The protein is Octanoyltransferase of Mycolicibacterium paratuberculosis (strain ATCC BAA-968 / K-10) (Mycobacterium paratuberculosis).